Consider the following 915-residue polypeptide: Protein translocase subunit SecA (915 aa).

ATP is bound by residues Q87, 105–109, and D512; that span reads GEGKT. A disordered region spans residues 881–915; that stretch reads LPGTAPVRPEPKIGRNEPCPCGSGKKYKHCHGQLN. The Zn(2+) site is built by C899, C901, C910, and H911. Residues 905–915 are compositionally biased toward basic residues; the sequence is KKYKHCHGQLN.

It belongs to the SecA family. As to quaternary structure, monomer and homodimer. Part of the essential Sec protein translocation apparatus which comprises SecA, SecYEG and auxiliary proteins SecDF-YajC and YidC. It depends on Zn(2+) as a cofactor.

The protein resides in the cell inner membrane. The protein localises to the cytoplasm. It catalyses the reaction ATP + H2O + cellular proteinSide 1 = ADP + phosphate + cellular proteinSide 2.. In terms of biological role, part of the Sec protein translocase complex. Interacts with the SecYEG preprotein conducting channel. Has a central role in coupling the hydrolysis of ATP to the transfer of proteins into and across the cell membrane, serving both as a receptor for the preprotein-SecB complex and as an ATP-driven molecular motor driving the stepwise translocation of polypeptide chains across the membrane. This is Protein translocase subunit SecA from Azotobacter vinelandii (strain DJ / ATCC BAA-1303).